The following is a 326-amino-acid chain: Biotin synthase (326 aa).

Positions 51 to 278 constitute a Radical SAM core domain; that stretch reads NRVQVSRLIS…KSFVRLSAGR (228 aa). Residues cysteine 66, cysteine 70, and cysteine 73 each coordinate [4Fe-4S] cluster. Positions 110, 141, 201, and 273 each coordinate [2Fe-2S] cluster.

The protein belongs to the radical SAM superfamily. Biotin synthase family. In terms of assembly, homodimer. [4Fe-4S] cluster is required as a cofactor. It depends on [2Fe-2S] cluster as a cofactor.

The enzyme catalyses (4R,5S)-dethiobiotin + (sulfur carrier)-SH + 2 reduced [2Fe-2S]-[ferredoxin] + 2 S-adenosyl-L-methionine = (sulfur carrier)-H + biotin + 2 5'-deoxyadenosine + 2 L-methionine + 2 oxidized [2Fe-2S]-[ferredoxin]. It functions in the pathway cofactor biosynthesis; biotin biosynthesis; biotin from 7,8-diaminononanoate: step 2/2. In terms of biological role, catalyzes the conversion of dethiobiotin (DTB) to biotin by the insertion of a sulfur atom into dethiobiotin via a radical-based mechanism. In Paramagnetospirillum magneticum (strain ATCC 700264 / AMB-1) (Magnetospirillum magneticum), this protein is Biotin synthase.